The sequence spans 334 residues: Malate dehydrogenase, cytoplasmic (334 aa).

Position 2 is an N-acetylserine (S2). NAD(+) contacts are provided by residues 11 to 17 and D42; that span reads GAAGQIA. Residues R92 and R98 each contribute to the substrate site. Position 105 (N105) interacts with NAD(+). K110 carries the post-translational modification N6-succinyllysine. Residue Q112 participates in NAD(+) binding. Residues K118 and K121 each carry the N6-acetyllysine modification. 129 to 131 lines the NAD(+) pocket; that stretch reads VGN. Substrate-binding residues include N131 and R162. H187 (proton acceptor) is an active-site residue. K214 is subject to N6-succinyllysine. S217 carries the post-translational modification Phosphoserine. At R230 the chain carries Omega-N-methylarginine. S241 is subject to Phosphoserine. N6-acetyllysine; alternate is present on K298. The residue at position 298 (K298) is an N6-succinyllysine; alternate. At S309 the chain carries Phosphoserine. K318 is modified (N6-succinyllysine). Phosphoserine is present on S333.

This sequence belongs to the LDH/MDH superfamily. MDH type 2 family. Homodimer. ISGylated. Post-translationally, acetylation at Lys-118 dramatically enhances enzymatic activity and promotes adipogenic differentiation.

It localises to the cytoplasm. The protein resides in the cytosol. It carries out the reaction (S)-malate + NAD(+) = oxaloacetate + NADH + H(+). The catalysed reaction is (2R)-2-hydroxy-3-(4-hydroxyphenyl)propanoate + NAD(+) = 3-(4-hydroxyphenyl)pyruvate + NADH + H(+). The enzyme catalyses (S)-2-hydroxyglutarate + NAD(+) = 2-oxoglutarate + NADH + H(+). Its function is as follows. Catalyzes the reduction of aromatic alpha-keto acids in the presence of NADH. Plays essential roles in the malate-aspartate shuttle and the tricarboxylic acid cycle, important in mitochondrial NADH supply for oxidative phosphorylation. Catalyzes the reduction of 2-oxoglutarate to 2-hydroxyglutarate, leading to elevated reactive oxygen species (ROS). This chain is Malate dehydrogenase, cytoplasmic (MDH1), found in Bos taurus (Bovine).